The primary structure comprises 2531 residues: MNIDKDVSALLCTAKKYVTQKEFNRQKMKFLLDDITKLLSKSFVSRIEQLDENEFMEKIMILQSITFTLHLITEKQELSSEEKIRLFQSVIASMCAFEDEELAKCFDRILSVLMISVTKQDPRETIYFLQGLLEVVKYCDVEPSSSLPQLITPEIASAISLGASGFFRYHLKWNIISTLFGENAGECVHFDELVLFWPHCRSQLEDKLKNDCSMTENCLRAGLTILKYKKLHNSILDQALFIDELFATFNSLTAKKSTNHMTFPKLLNEIQHFLQDHGKVLIMHKELRQKPVQWLIIYLELIDDANDKFGLLENFSLLLLDLSTNHDIHEFPARLCMTASEICMRRIKHSIQSTHTDCLADYLDILASLLKLARIQKLDIFQCFATEIEAHHSLNNPLWPRILRSLLSVQNPHCQQFCKKFVPSIDKLWITLLNGESSRATLNSLVIVTASCPFANNNDEGVKQIIPFLLIPCFQDFRDRVGSKWDNFRFIGLPKSEPSELINLERFTTVLERSTSESTKLRAVNCALQLEKKTGKYINLVAEMSLAVFSKSQTDRIANSFEPLILFLTDNLQLINDFITILIAKLCEKQEFYSELTILKYFKTLQKLFCLAANGRNSCKKCGEECFVDPDSKENVKIDYESLSGLIKGIVARRNTFSQELIREFLQTSRVMLLHVDSKGIASSFTSIIKALDIGFSENANAYFRVWELVCCRSEATVEKKLQMYIPLIGRSFALLGDDAALKVHGFLSNVLSARLSSTVKATLFASSFAHSVLKNCEIDWNVSYTWKTQFSQCLIKAPVGTCEEALQIMFKRYSTIFTRCFLNRLFFDASSAGAQKPSYDEHRIREITRCYLSHVLSDFNFPNQKITFNMIRPSLLYWSLLSSARGINSKLTLSVIDFICQEMSAASVSMSSISPNPSDIRIVMIQRKSLITETFAQLVQFLAFENNRNTTSFWKFCSDHCDFKDEDIRTVISSYRKQVFMHLLLVSAREFLNPRNPSMIVEQLRATYENIKKGEKFMISTAIETRNEGIEFLFIFRTYFTNDQYFLTREATAESFRILLQNMKQDFFDTNWYIILMTLRQIPLNLDSTQSSWISFIEQINYSILRSNIWRILTDISRIENNDILIEKVWNRLSYDMVIDKISTDAMIKRVFWLIPLEVEKRIDLKFEISKSRQIEDVLEFIRMFPQYPSVQFADNLASKIERKTVYKEELPKLIGSLSRILPQCHSKREQNKIIKILQKLPIICSDLPDHNFIRWDTRFKFFCEPRQLTQAVLEDCAGIVEVMTGTSKIEYVDRTMCEIYKFFNPNEASPEMKSTLDGIKNMYAKMICSQKPEPSMIEQKTIDELSLGGSRRESFSRWLTVIILKCAEMSEDAPLSSLASIAHVDDTRFLSKLAMRFILTVIHMERDSVTQWILSTFEEALTNTNHRRLTNSDRGPASFVFYVFDFIYSYSSSEELRKKKKIWEKVISFWKSMMSWTFKDENGHGQPLIVKVAETFGMEKRCILWLEMFMEQKRKTSTEIESETEAAYYFTLMNLYGRIHELNGVRGAYARLSRIQIDHVYGKISMREAFGDFNSAACFARMTGKGKPFNSTEAIQKLIDELNCLEYSQIERNEQEDYLNSLKTLSQWVNIDNDIGPSPHIFSRNIEYWATESTILKMIRNDERDEIVNNAIENAKSKVIERLSECAIGGSCSYEIATPFLVELQKLNEIVELKNVSNDELSAFNSDFWKNIQKRTDDSEQKISILEPILRVRRSMLDIRMQSMTGRDKENIRSRIVEVHLQSARIARLTGCFERAQLSLINAKKVLPFENKIVLEEAKLQLQTSDELNGMSLLDSIISKNFGDLHTIYTDTQQSVNLDVQKSAKLKIEHYQEETKNLFSSVQMLRISHMIKAGNTIGFDKVYHETTQLLQCFAHSGVMYEAAWLLDYLSNYKERSKHVLPLLKAYKEVAKYEKNQVLQARAVERMTSLWLSNTRKISTHISSVPKLPEGQISDLRQNIKSMNREIQTALEHIGWRAFYPAYAVLARHIDHQDEEVTRTIKQIMKQLILRMPHQCMWQSAYLLRQNIASVKEKYMEVLTEVKRKAPCYVTLIDQYDYASGVFNTVSGKVESDDCKLSEKVDGLKTMFRDKKYDPKELVMNRRVDCDCKILSGIMVPVRSVIDESVHDTEIRDDGFEESCHLPDRYLIHDFSDKVKVLHSNTKPVIIKLTTKTGRIVRLICKKDDDLSKDYHFTKMVEMCNDLLMKDEQTRIQKMTATTYSVIPLGKQGGIIEFMEGVTSFYETLDKLMGMTSGEWLEKLKFWNTHMKPMGKEERTKYFREVACKNTPVVMGKWFRIQYPEAGQWFASRKLFAKSTAVMSVIGYIFGLGDRHTKNLMVHTTGKCIHVDFDMIFNKGETLGTPELVPFRLTQNMINGMGEVALDGEFRTVCEQALRVFRENSYEIEKYIADLPNLVADFPSNKRAPKDFDMSEAKRLVSGRLRGQIMTAKLYRSNPISHPMQVSQLASSLIELATSEEKLSEMYLGWMATL.

Residues 1490-2067 (LIVKVAETFG…MWQSAYLLRQ (578 aa)) enclose the FAT domain. One can recognise a PI3K/PI4K catalytic domain in the interval 2192–2512 (FSDKVKVLHS…VSQLASSLIE (321 aa)). A G-loop region spans residues 2198–2204 (VLHSNTK). A catalytic loop region spans residues 2368 to 2376 (GLGDRHTKN). The interval 2387 to 2411 (HVDFDMIFNKGETLGTPELVPFRLT) is activation loop. The 33-residue stretch at 2499–2531 (HPMQVSQLASSLIELATSEEKLSEMYLGWMATL) folds into the FATC domain.

The protein belongs to the PI3/PI4-kinase family. ATM subfamily. The cofactor is Mn(2+).

Its subcellular location is the nucleus. It carries out the reaction L-seryl-[protein] + ATP = O-phospho-L-seryl-[protein] + ADP + H(+). The catalysed reaction is L-threonyl-[protein] + ATP = O-phospho-L-threonyl-[protein] + ADP + H(+). In terms of biological role, serine/threonine protein kinase which activates checkpoint signaling upon genotoxic stresses such as ionizing radiation (IR), ultraviolet light (UV), or DNA replication stalling, thereby acting as a DNA damage sensor. Recognizes the substrate consensus sequence [ST]-Q. Phosphorylates various proteins, which collectively inhibits DNA replication and mitosis and promotes DNA repair and recombination. Prevents mitotic catastrophe by functioning in the S-phase checkpoint and cooperating with atm-1 in the checkpoint response to double-strand breaks (DSBs) after ionizing radiation (IR) to induce cell cycle arrest or apoptosis via the cep-1/p53 pathway. In response to ionizing radiation, probably required for the association between the brc-1-brd-1 heterodimer and rad-51 and let-70 in order to activate E3-ubiquitin ligase activity of the heterodimer and induce ubiquitination at DNA damage sites. The protein is Serine/threonine-protein kinase ATR of Caenorhabditis elegans.